Consider the following 816-residue polypeptide: Protein hunchback (816 aa).

4 disordered regions span residues leucine 33–aspartate 92, glutamine 129–asparagine 151, tyrosine 165–valine 185, and alanine 197–asparagine 229. Composition is skewed to low complexity over residues serine 49–glutamine 60, glutamine 79–glutamine 89, and glutamine 129–glutamine 139. Threonine 199 is subject to Phosphothreonine. Serine 209, serine 228, serine 230, and serine 231 each carry phosphoserine. Residues glutamate 219–asparagine 229 show a composition bias toward basic and acidic residues. C2H2-type zinc fingers lie at residues tyrosine 261 to histidine 283, leucine 290 to histidine 312, phenylalanine 318 to histidine 340, and tyrosine 346 to histidine 364. Disordered stretches follow at residues valine 387 to glutamine 427, leucine 536 to histidine 612, and glycine 679 to threonine 734. 2 stretches are compositionally biased toward low complexity: residues serine 399–glutamine 427 and leucine 536–glutamine 560. Acidic residues predominate over residues asparagine 567–aspartate 578. Phosphoserine occurs at positions 584 and 587. Residues serine 712 to threonine 734 are compositionally biased toward low complexity. 2 consecutive C2H2-type zinc fingers follow at residues tyrosine 763–histidine 785 and phenylalanine 791–histidine 815.

Belongs to the hunchback C2H2-type zinc-finger protein family.

Its subcellular location is the nucleus. In terms of biological role, gap class segmentation protein that controls development of head structures. This Drosophila virilis (Fruit fly) protein is Protein hunchback.